We begin with the raw amino-acid sequence, 76 residues long: Large ribosomal subunit protein bL31 (76 aa).

This sequence belongs to the bacterial ribosomal protein bL31 family. Type A subfamily. Part of the 50S ribosomal subunit.

In terms of biological role, binds the 23S rRNA. The chain is Large ribosomal subunit protein bL31 (rpmE) from Pelagibacter ubique (strain HTCC1062).